We begin with the raw amino-acid sequence, 206 residues long: VEL1-related protein YOR387C (206 aa).

The N-terminal stretch at 1 to 19 (MSFLNIFTFFSVLVSVATA) is a signal peptide. Residues Asn-26, Asn-48, Asn-91, Asn-139, Asn-152, and Asn-183 are each glycosylated (N-linked (GlcNAc...) asparagine).

It belongs to the VEL1 family. Post-translationally, N-glycosylated.

Its subcellular location is the cytoplasm. It localises to the cytosol. The sequence is that of VEL1-related protein YOR387C from Saccharomyces cerevisiae (strain ATCC 204508 / S288c) (Baker's yeast).